The sequence spans 1049 residues: Dyslexia-associated protein KIAA0319-like protein (1049 aa).

Topologically, residues 1-29 are cytoplasmic; the sequence is MEKRLGVKPNPASWILSGYYWQTSAKWLR. A helical membrane pass occupies residues 30–50; that stretch reads SLYLFYTCFCFSVLWLSTDAS. The MANSC domain occupies 49-127; sequence ASESRCQQGK…AFRTHSSNSM (79 aa). Topologically, residues 51 to 932 are extracellular; it reads ESRCQQGKTQ…DSNCEWSVLY (882 aa). Asn247, Asn395, Asn472, Asn487, and Asn525 each carry an N-linked (GlcNAc...) asparagine glycan. PKD domains lie at 312–401, 409–498, 504–594, 600–688, and 694–785; these read SAGE…VKPE, IAIV…VNKA, VANA…VQPE, QADA…VKEE, and IAKI…VKPD. Residues 933 to 953 traverse the membrane as a helical segment; the sequence is VIIATFVIVVALGILSWTVIC. The Cytoplasmic segment spans residues 954–1049; that stretch reads CCKRQKGKPK…KARSPREEIL (96 aa). A Phosphothreonine modification is found at Thr974. Ser978, Ser1009, and Ser1031 each carry phosphoserine. The segment at 1022–1049 is disordered; that stretch reads GKLLHGQNGSVPNGQTPLKARSPREEIL. Over residues 1028-1037 the composition is skewed to polar residues; sequence QNGSVPNGQT. At Thr1037 the chain carries Phosphothreonine.

Interacts with RTN4R. As to quaternary structure, (Microbial infection) Interacts with AAV-2 VP1. Post-translationally, N-glycosylated. In terms of tissue distribution, expressed in cortical neurons in the brain cortex (at protein level).

It is found in the cytoplasmic granule membrane. Its subcellular location is the golgi apparatus membrane. It localises to the golgi apparatus. The protein localises to the trans-Golgi network membrane. The protein resides in the cell membrane. Possible role in axon guidance through interaction with RTN4R. Its function is as follows. (Microbial infection) Acts as a receptor for adeno-associated virus and is involved in adeno-associated virus infection through endocytosis system. The polypeptide is Dyslexia-associated protein KIAA0319-like protein (Homo sapiens (Human)).